A 600-amino-acid chain; its full sequence is NADH-quinone oxidoreductase subunit C/D (600 aa).

Positions 1–190 (MIDLMPKKNT…EPFFLNEQKE (190 aa)) are NADH dehydrogenase I subunit C. Residues 214–600 (EFMFLNLGPN…IDFVMSDVDR (387 aa)) are NADH dehydrogenase I subunit D.

The protein in the N-terminal section; belongs to the complex I 30 kDa subunit family. It in the C-terminal section; belongs to the complex I 49 kDa subunit family. In terms of assembly, NDH-1 is composed of 13 different subunits. Subunits NuoB, CD, E, F, and G constitute the peripheral sector of the complex.

It is found in the cell membrane. The catalysed reaction is a quinone + NADH + 5 H(+)(in) = a quinol + NAD(+) + 4 H(+)(out). Functionally, NDH-1 shuttles electrons from NADH, via FMN and iron-sulfur (Fe-S) centers, to quinones in the respiratory chain. The immediate electron acceptor for the enzyme in this species is believed to be ubiquinone. Couples the redox reaction to proton translocation (for every two electrons transferred, four hydrogen ions are translocated across the cytoplasmic membrane), and thus conserves the redox energy in a proton gradient. The chain is NADH-quinone oxidoreductase subunit C/D from Buchnera aphidicola subsp. Acyrthosiphon pisum (strain Tuc7).